A 262-amino-acid polypeptide reads, in one-letter code: Acyl-[acyl-carrier-protein]--UDP-N-acetylglucosamine O-acyltransferase (262 aa).

It belongs to the transferase hexapeptide repeat family. LpxA subfamily. Homotrimer.

It localises to the cytoplasm. The enzyme catalyses a (3R)-hydroxyacyl-[ACP] + UDP-N-acetyl-alpha-D-glucosamine = a UDP-3-O-[(3R)-3-hydroxyacyl]-N-acetyl-alpha-D-glucosamine + holo-[ACP]. Its pathway is glycolipid biosynthesis; lipid IV(A) biosynthesis; lipid IV(A) from (3R)-3-hydroxytetradecanoyl-[acyl-carrier-protein] and UDP-N-acetyl-alpha-D-glucosamine: step 1/6. Involved in the biosynthesis of lipid A, a phosphorylated glycolipid that anchors the lipopolysaccharide to the outer membrane of the cell. The sequence is that of Acyl-[acyl-carrier-protein]--UDP-N-acetylglucosamine O-acyltransferase from Salmonella schwarzengrund (strain CVM19633).